Consider the following 150-residue polypeptide: Ribosomal RNA large subunit methyltransferase H (150 aa).

Residues leucine 71, glycine 100, and 118–123 (FSQMTF) each bind S-adenosyl-L-methionine.

The protein belongs to the RNA methyltransferase RlmH family. In terms of assembly, homodimer.

It localises to the cytoplasm. The catalysed reaction is pseudouridine(1915) in 23S rRNA + S-adenosyl-L-methionine = N(3)-methylpseudouridine(1915) in 23S rRNA + S-adenosyl-L-homocysteine + H(+). Functionally, specifically methylates the pseudouridine at position 1915 (m3Psi1915) in 23S rRNA. The polypeptide is Ribosomal RNA large subunit methyltransferase H (Mycoplasmopsis agalactiae (strain NCTC 10123 / CIP 59.7 / PG2) (Mycoplasma agalactiae)).